Reading from the N-terminus, the 367-residue chain is tRNA/tmRNA (uracil-C(5))-methyltransferase (367 aa).

S-adenosyl-L-methionine contacts are provided by Gln-182, Tyr-210, Asn-215, Glu-231, and Asp-293. Cys-318 (nucleophile) is an active-site residue. Catalysis depends on Glu-352, which acts as the Proton acceptor.

This sequence belongs to the class I-like SAM-binding methyltransferase superfamily. RNA M5U methyltransferase family. TrmA subfamily.

The enzyme catalyses uridine(54) in tRNA + S-adenosyl-L-methionine = 5-methyluridine(54) in tRNA + S-adenosyl-L-homocysteine + H(+). It catalyses the reaction uridine(341) in tmRNA + S-adenosyl-L-methionine = 5-methyluridine(341) in tmRNA + S-adenosyl-L-homocysteine + H(+). Functionally, dual-specificity methyltransferase that catalyzes the formation of 5-methyluridine at position 54 (m5U54) in all tRNAs, and that of position 341 (m5U341) in tmRNA (transfer-mRNA). The sequence is that of tRNA/tmRNA (uracil-C(5))-methyltransferase from Neisseria meningitidis serogroup C (strain 053442).